We begin with the raw amino-acid sequence, 234 residues long: Adenosine 5'-phosphosulfate reductase (234 aa).

4 residues coordinate [4Fe-4S] cluster: Cys120, Cys121, Cys203, and Cys206. Cys229 (nucleophile; cysteine thiosulfonate intermediate) is an active-site residue.

This sequence belongs to the PAPS reductase family. CysH subfamily. The cofactor is [4Fe-4S] cluster.

The protein localises to the cytoplasm. It carries out the reaction [thioredoxin]-disulfide + sulfite + AMP + 2 H(+) = adenosine 5'-phosphosulfate + [thioredoxin]-dithiol. The protein operates within sulfur metabolism; hydrogen sulfide biosynthesis; sulfite from sulfate. Its function is as follows. Catalyzes the formation of sulfite from adenosine 5'-phosphosulfate (APS) using thioredoxin as an electron donor. The chain is Adenosine 5'-phosphosulfate reductase from Bacillus thuringiensis (strain Al Hakam).